Here is a 210-residue protein sequence, read N- to C-terminus: MTNRTLSREEIRKLDRDLRILVATNGTLTRVLNVVANEEIVVDIINQQLLDVAPKIPELENLKIGRILQRDILLKGQKSGILFVAAESLIVIDLLPTAITTYLTKTHHPIGEIMAASRIETYKEDAQVWIGDLPCWLADYGYWDLPKRAVGRRYRIIAGGQPVIITTEYFLRSVFQDTPREELDRCQYSNDIDTRSGDRFVLHGRVFKNL.

This sequence belongs to the chorismate pyruvate-lyase type 2 family.

It carries out the reaction chorismate = 4-hydroxybenzoate + pyruvate. Removes the pyruvyl group from chorismate to provide 4-hydroxybenzoate (4HB). Involved in the synthesis of glycosylated p-hydroxybenzoic acid methyl esters (p-HBADs) and phenolic glycolipids (PGL) that play important roles in the pathogenesis of mycobacterial infections. This Mycobacterium leprae (strain TN) protein is Chorismate pyruvate-lyase.